A 241-amino-acid chain; its full sequence is NH(3)-dependent NAD(+) synthetase (241 aa).

27 to 34 contacts ATP; that stretch reads GISGGIDS. Residue Asp33 coordinates Mg(2+). Residue Arg109 participates in deamido-NAD(+) binding. An ATP-binding site is contributed by Thr129. Glu134 contributes to the Mg(2+) binding site. Deamido-NAD(+) is bound by residues Lys142 and Asp149. Residues Lys158 and Thr180 each contribute to the ATP site. Deamido-NAD(+) is bound at residue 231–232; sequence HK.

It belongs to the NAD synthetase family. Homodimer.

The catalysed reaction is deamido-NAD(+) + NH4(+) + ATP = AMP + diphosphate + NAD(+) + H(+). It participates in cofactor biosynthesis; NAD(+) biosynthesis; NAD(+) from deamido-NAD(+) (ammonia route): step 1/1. Catalyzes the ATP-dependent amidation of deamido-NAD to form NAD. Uses ammonia as a nitrogen source. In Thermoplasma acidophilum (strain ATCC 25905 / DSM 1728 / JCM 9062 / NBRC 15155 / AMRC-C165), this protein is NH(3)-dependent NAD(+) synthetase.